Consider the following 352-residue polypeptide: DNA polymerase IV (352 aa).

Residues 6–186 enclose the UmuC domain; that stretch reads IIHIDMDAFY…LPLGKIPGVG (181 aa). The Mg(2+) site is built by Asp-10 and Asp-104. Glu-105 is an active-site residue.

This sequence belongs to the DNA polymerase type-Y family. Monomer. It depends on Mg(2+) as a cofactor.

The protein resides in the cytoplasm. The enzyme catalyses DNA(n) + a 2'-deoxyribonucleoside 5'-triphosphate = DNA(n+1) + diphosphate. Its function is as follows. Poorly processive, error-prone DNA polymerase involved in untargeted mutagenesis. Copies undamaged DNA at stalled replication forks, which arise in vivo from mismatched or misaligned primer ends. These misaligned primers can be extended by PolIV. Exhibits no 3'-5' exonuclease (proofreading) activity. May be involved in translesional synthesis, in conjunction with the beta clamp from PolIII. The protein is DNA polymerase IV of Neisseria meningitidis serogroup C / serotype 2a (strain ATCC 700532 / DSM 15464 / FAM18).